A 359-amino-acid chain; its full sequence is MSTENTLSVADLARENVRNLVPYQSARRLGGNGDVWLNANEFPTAVEFQLTQQTLNRYPECQPKAVIENYAQYAGVKPEQVLVSRGADEGIELVIRAFCEPGKDAILYCPPTYGMYSVSAETIGVERRTVPALENWQLDLQGISDNLDGAKVVFVCSPNNPTGQLINPQDLRTLLELTRGKAIVVADEAYIEFCPQATLTGWLVEYPHLVILRTLSKAFALAGLRCGFTLANEEVINLLLKVIAPYPLSTPVADIAAQALSPQGINAMRDRVAQTVQERQYLVNALQQTACVEHVFDSETNYILARFTASSSVFKSLWDQGIILRDQNKQPSLSGCLRITVGTRQENQRVIDALRAEPV.

Lys217 bears the N6-(pyridoxal phosphate)lysine mark.

The protein belongs to the class-II pyridoxal-phosphate-dependent aminotransferase family. Histidinol-phosphate aminotransferase subfamily. As to quaternary structure, homodimer. The cofactor is pyridoxal 5'-phosphate.

The catalysed reaction is L-histidinol phosphate + 2-oxoglutarate = 3-(imidazol-4-yl)-2-oxopropyl phosphate + L-glutamate. It participates in amino-acid biosynthesis; L-histidine biosynthesis; L-histidine from 5-phospho-alpha-D-ribose 1-diphosphate: step 7/9. The polypeptide is Histidinol-phosphate aminotransferase (Salmonella newport (strain SL254)).